We begin with the raw amino-acid sequence, 176 residues long: Adenine phosphoribosyltransferase (176 aa).

It belongs to the purine/pyrimidine phosphoribosyltransferase family. As to quaternary structure, homodimer.

The protein localises to the cytoplasm. The catalysed reaction is AMP + diphosphate = 5-phospho-alpha-D-ribose 1-diphosphate + adenine. It participates in purine metabolism; AMP biosynthesis via salvage pathway; AMP from adenine: step 1/1. Catalyzes a salvage reaction resulting in the formation of AMP, that is energically less costly than de novo synthesis. The protein is Adenine phosphoribosyltransferase of Borreliella afzelii (strain PKo) (Borrelia afzelii).